The primary structure comprises 343 residues: tRNA N6-adenosine threonylcarbamoyltransferase (343 aa).

Histidine 116 and histidine 120 together coordinate Fe cation. Substrate is bound by residues 138–142, aspartate 171, glycine 184, aspartate 188, and asparagine 277; that span reads LVSGG. Aspartate 306 is a Fe cation binding site.

This sequence belongs to the KAE1 / TsaD family. Fe(2+) serves as cofactor.

It localises to the cytoplasm. It carries out the reaction L-threonylcarbamoyladenylate + adenosine(37) in tRNA = N(6)-L-threonylcarbamoyladenosine(37) in tRNA + AMP + H(+). Its function is as follows. Required for the formation of a threonylcarbamoyl group on adenosine at position 37 (t(6)A37) in tRNAs that read codons beginning with adenine. Is involved in the transfer of the threonylcarbamoyl moiety of threonylcarbamoyl-AMP (TC-AMP) to the N6 group of A37, together with TsaE and TsaB. TsaD likely plays a direct catalytic role in this reaction. In Ligilactobacillus salivarius (strain UCC118) (Lactobacillus salivarius), this protein is tRNA N6-adenosine threonylcarbamoyltransferase.